Consider the following 43-residue polypeptide: Protein PsbN (43 aa).

A helical transmembrane segment spans residues 4 to 24; the sequence is ATIIVIFVSSLLLGITAYSIY.

This sequence belongs to the PsbN family.

The protein resides in the plastid. Its subcellular location is the chloroplast thylakoid membrane. May play a role in photosystem I and II biogenesis. In Trieres chinensis (Marine centric diatom), this protein is Protein PsbN.